The following is a 90-amino-acid chain: Small ribosomal subunit protein bS16 (90 aa).

The protein belongs to the bacterial ribosomal protein bS16 family.

The polypeptide is Small ribosomal subunit protein bS16 (Lysinibacillus sphaericus (strain C3-41)).